A 462-amino-acid polypeptide reads, in one-letter code: ATP synthase subunit beta (462 aa).

151–158 (GGAGVGKT) lines the ATP pocket.

Belongs to the ATPase alpha/beta chains family. As to quaternary structure, F-type ATPases have 2 components, CF(1) - the catalytic core - and CF(0) - the membrane proton channel. CF(1) has five subunits: alpha(3), beta(3), gamma(1), delta(1), epsilon(1). CF(0) has four main subunits: a(1), b(1), b'(1) and c(9-12).

Its subcellular location is the cell inner membrane. It carries out the reaction ATP + H2O + 4 H(+)(in) = ADP + phosphate + 5 H(+)(out). In terms of biological role, produces ATP from ADP in the presence of a proton gradient across the membrane. The catalytic sites are hosted primarily by the beta subunits. The protein is ATP synthase subunit beta of Chlorobium phaeovibrioides (strain DSM 265 / 1930) (Prosthecochloris vibrioformis (strain DSM 265)).